We begin with the raw amino-acid sequence, 568 residues long: WW domain-containing protein A (568 aa).

Residues 6–129 (PLNNSNGSNS…TGPISHDVVF (124 aa)) form the C2 domain. The 35-residue stretch at 325–359 (VKLPDGWESRIDPVSGKVFYLNHNNKTTSWISPLE) folds into the WW 1 domain. Residues 376-461 (TILDNNNNNN…SRPKKTPATP (86 aa)) are disordered. A compositionally biased stretch (low complexity) spans 380–418 (NNNNNNNNNNNNNNNNNNNNNNINNTNNIQQKQQAQQQP). Residues 435 to 451 (QKEKEKEKEINAEDYKI) show a composition bias toward basic and acidic residues. The WW 2 domain occupies 519 to 552 (QGLPNGWEVRQDQFGRVFYVDHINRATTWTRPTV).

Interacts with calmodulin in the absence of Ca(2+).

The protein localises to the nucleus. It localises to the nucleolus. It is found in the cytoplasm. Its subcellular location is the cell cortex. The protein resides in the cytoskeleton. In terms of biological role, involved in regulation of actin cytoskeleton organization and cytokinesis. The chain is WW domain-containing protein A from Dictyostelium discoideum (Social amoeba).